The primary structure comprises 122 residues: Small ribosomal subunit protein uS13 (122 aa).

Residues 99-122 are disordered; the sequence is RGQRTHTNARTRKGPAKAIAGKKK.

The protein belongs to the universal ribosomal protein uS13 family. Part of the 30S ribosomal subunit. Forms a loose heterodimer with protein S19. Forms two bridges to the 50S subunit in the 70S ribosome.

Located at the top of the head of the 30S subunit, it contacts several helices of the 16S rRNA. In the 70S ribosome it contacts the 23S rRNA (bridge B1a) and protein L5 of the 50S subunit (bridge B1b), connecting the 2 subunits; these bridges are implicated in subunit movement. Contacts the tRNAs in the A and P-sites. The polypeptide is Small ribosomal subunit protein uS13 (Agrobacterium fabrum (strain C58 / ATCC 33970) (Agrobacterium tumefaciens (strain C58))).